A 346-amino-acid polypeptide reads, in one-letter code: tRNA N6-adenosine threonylcarbamoyltransferase (346 aa).

Positions 111 and 115 each coordinate Fe cation. Residues leucine 134–glycine 138, aspartate 167, glycine 180, and asparagine 279 each bind substrate. Residue aspartate 307 coordinates Fe cation.

The protein belongs to the KAE1 / TsaD family. The cofactor is Fe(2+).

The protein localises to the cytoplasm. The catalysed reaction is L-threonylcarbamoyladenylate + adenosine(37) in tRNA = N(6)-L-threonylcarbamoyladenosine(37) in tRNA + AMP + H(+). Its function is as follows. Required for the formation of a threonylcarbamoyl group on adenosine at position 37 (t(6)A37) in tRNAs that read codons beginning with adenine. Is involved in the transfer of the threonylcarbamoyl moiety of threonylcarbamoyl-AMP (TC-AMP) to the N6 group of A37, together with TsaE and TsaB. TsaD likely plays a direct catalytic role in this reaction. This is tRNA N6-adenosine threonylcarbamoyltransferase from Burkholderia mallei (strain ATCC 23344).